Reading from the N-terminus, the 432-residue chain is D-amino acid dehydrogenase (432 aa).

3–17 (VVILGSGVVGVTSAW) contributes to the FAD binding site.

This sequence belongs to the DadA oxidoreductase family. Requires FAD as cofactor.

It catalyses the reaction a D-alpha-amino acid + A + H2O = a 2-oxocarboxylate + AH2 + NH4(+). It functions in the pathway amino-acid degradation; D-alanine degradation; NH(3) and pyruvate from D-alanine: step 1/1. In terms of biological role, oxidative deamination of D-amino acids. The sequence is that of D-amino acid dehydrogenase from Salmonella agona (strain SL483).